The sequence spans 867 residues: MLSPNDKMLGKLDPFYQPSVSKQKTSAEIISEARNALRTVRTQRPFTPQEAQRKLFGPASSRTSENRPPSSFSLHASSFESSDSRPISGTRLSPLELKPKVPASPTREEDSCFSFPKPPVDPAKIRRVSNARARLFRAASQRALLPDRSLPPSDSKKTVESKETVMMGDSMVKINGIYLTKSNAICHLKSHPLQLTDDGGFSEIKEQEMFKGTTSLPSHLKNGGDQGKRHARASSCPSSSDLSRLQTKAVPKADLQEEDAEIEVDEVFWNTRIVPILRELEKEENIETVCAACTQLHHALEEGNMLGNKFKGRSILLKTLCKLVDVGSDSLSLKLAKIILALKVSRKNLLNVCKLIFKISRNEKNDSLIQNDSILESLLEVLRSEDLQTNMEAFLYCMGSIKFISGNLGFLNEMISKGAVEILINLIKQINENIKKCGTFLPNSGHLLVQVTATLRNLVDSSLVRSKFLNISALPQLCTAMEQYKGDKDVCTNIARIFSKLTSYRDCCTALASYSRCYALFLNLINKYQKKQDLVVRVVFILGNLTAKNNQAREQFSKEKGSIQTLLSLFQTFHQLDLHSQKPVGQRGEQHRAQRPPSEAEDVLIKLTRVLANIAIHPGVGPVLAANPGIVGLLLTTLEYKSLDDCEELVINATATINNLSYYQVKNSIIQDKKLYIAELLLKLLVSNNMDGILEAVRVFGNLSQDHDVCDFIVQNNVHRFMMALLDAQHQDICFSACGVLLNLTVDKDKRVILKEGGGIKKLVDCLRDLGPTDWQLACLVCKTLWNFSENITNASSCFGNEDTNTLLLLLSSFLDEELALDGSFDPDLKNYHKLHWETEFKPVAQQLLNRIQRHHTFLEPLPIPSF.

2 disordered regions span residues 1–115 (MLSP…CFSF) and 214–252 (TSLP…AVPK). Polar residues-rich tracts occupy residues 18–28 (PSVSKQKTSAE), 40–50 (VRTQRPFTPQE), and 60–69 (SSRTSENRPP). Composition is skewed to low complexity over residues 70–81 (SSFSLHASSFES) and 234–243 (SSCPSSSDLS). ARM repeat units lie at residues 262–301 (IEVD…HALE), 304–344 (NMLG…ALKV), 363–403 (EKND…SIKF), 408–449 (LGFL…HLLV), 462–503 (SLVR…KLTS), 506–547 (DCCT…NLTA), 551–589 (QARE…QRGE), 591–616 (HRAQ…NIAI), 619–662 (GVGP…NLSY), 664–705 (QVKN…NLSQ), 707–746 (HDVC…NLTV), and 748–790 (KDKR…NFSE).

As to expression, expressed at higher level in testis.

Its function is as follows. Required for sperm flagellum axoneme organization and function. Involved in axonemal central pair complex assembly and/or stability. In Homo sapiens (Human), this protein is Armadillo repeat-containing protein 2.